The following is a 30-amino-acid chain: GWKDWLKTAGGWLKKKGPSILKAVVGAATQ.

This sequence belongs to the ponericin-G family. In terms of tissue distribution, expressed by the venom gland.

The protein resides in the secreted. In terms of biological role, has activity against some Gram-positive bacteria and S.cerevisiae. Has a non-hemolytic activity. This is U1-poneritoxin-Ni3d from Neoponera inversa (Ant).